The following is a 308-amino-acid chain: Bifunctional protein FolD (308 aa).

NADP(+) contacts are provided by residues 175–177 (GRS), Ser-200, and Ile-241.

Belongs to the tetrahydrofolate dehydrogenase/cyclohydrolase family. In terms of assembly, homodimer.

The catalysed reaction is (6R)-5,10-methylene-5,6,7,8-tetrahydrofolate + NADP(+) = (6R)-5,10-methenyltetrahydrofolate + NADPH. The enzyme catalyses (6R)-5,10-methenyltetrahydrofolate + H2O = (6R)-10-formyltetrahydrofolate + H(+). The protein operates within one-carbon metabolism; tetrahydrofolate interconversion. In terms of biological role, catalyzes the oxidation of 5,10-methylenetetrahydrofolate to 5,10-methenyltetrahydrofolate and then the hydrolysis of 5,10-methenyltetrahydrofolate to 10-formyltetrahydrofolate. This chain is Bifunctional protein FolD, found in Jannaschia sp. (strain CCS1).